Reading from the N-terminus, the 501-residue chain is Mitochondrial inner membrane i-AAA protease supercomplex subunit MGR3 (501 aa).

Topologically, residues 1-77 are mitochondrial matrix; that stretch reads MLLQGMRLSQ…PKPNLKKKNR (77 aa). Residues 39–72 form a disordered region; it reads RPPASNFNTQESAPIPESPANSPTRPQMAPKPNL. The chain crosses the membrane as a helical span at residues 78-95; it reads SLMYSIIGVSIVGLYFWF. Topologically, residues 96–501 are mitochondrial intermembrane; sequence KSNSRKQKLP…LKAAKKEGLN (406 aa). 4 TPR repeats span residues 109-144, 154-187, 386-420, and 440-473; these read QKVW…CDRS, TRIE…FFEA, GTYI…AKRN, and ALST…AKET.

This sequence belongs to the MGR3 family. In terms of assembly, component of the mitochondrial inner membrane i-AAA protease supercomplex composed of MGR1, MGR3 and YME1. With MGR1, forms a subcomplex that binds to YME1 and to substrates to facilitate proteolysis.

It localises to the mitochondrion inner membrane. Functionally, component of the mitochondrial inner membrane i-AAA protease supercomplex, which degrades misfolded mitochondrial proteins. Together with MGR1, functions in an adapter complex that targets substrates to the i-AAA protease for degradation. Required for growth of cells lacking the mitochondrial genome. This is Mitochondrial inner membrane i-AAA protease supercomplex subunit MGR3 (MGR3) from Saccharomyces cerevisiae (strain ATCC 204508 / S288c) (Baker's yeast).